Consider the following 241-residue polypeptide: Thiamine import ATP-binding protein ThiQ (241 aa).

Residues 7–235 (IRLSDVRFSY…AGPEALRHYI (229 aa)) enclose the ABC transporter domain. Position 37–44 (37–44 (GPSGSGKS)) interacts with ATP.

Belongs to the ABC transporter superfamily. Thiamine importer (TC 3.A.1.19.1) family. The complex is composed of two ATP-binding proteins (ThiQ), two transmembrane proteins (ThiP) and a solute-binding protein (ThiB).

Its subcellular location is the cell inner membrane. It catalyses the reaction thiamine(out) + ATP + H2O = thiamine(in) + ADP + phosphate + H(+). Its function is as follows. Part of the ABC transporter complex ThiBPQ involved in thiamine import. Responsible for energy coupling to the transport system. This Brucella abortus biovar 1 (strain 9-941) protein is Thiamine import ATP-binding protein ThiQ.